The primary structure comprises 383 residues: 1-deoxy-D-xylulose 5-phosphate reductoisomerase (383 aa).

The NADPH site is built by Thr10, Gly11, Ser12, Ile13, Asn38, and Asn121. Lys122 contacts 1-deoxy-D-xylulose 5-phosphate. Glu123 is a binding site for NADPH. Position 147 (Asp147) interacts with Mn(2+). Positions 148, 149, 172, and 195 each coordinate 1-deoxy-D-xylulose 5-phosphate. Glu149 contacts Mn(2+). An NADPH-binding site is contributed by Gly201. 1-deoxy-D-xylulose 5-phosphate is bound by residues Ser208, Asn213, Lys214, and Glu217. Residue Glu217 participates in Mn(2+) binding.

It belongs to the DXR family. The cofactor is Mg(2+). Requires Mn(2+) as cofactor.

It catalyses the reaction 2-C-methyl-D-erythritol 4-phosphate + NADP(+) = 1-deoxy-D-xylulose 5-phosphate + NADPH + H(+). The protein operates within isoprenoid biosynthesis; isopentenyl diphosphate biosynthesis via DXP pathway; isopentenyl diphosphate from 1-deoxy-D-xylulose 5-phosphate: step 1/6. Catalyzes the NADPH-dependent rearrangement and reduction of 1-deoxy-D-xylulose-5-phosphate (DXP) to 2-C-methyl-D-erythritol 4-phosphate (MEP). The chain is 1-deoxy-D-xylulose 5-phosphate reductoisomerase from Ruthia magnifica subsp. Calyptogena magnifica.